A 602-amino-acid chain; its full sequence is Proteasome-associated ATPase (602 aa).

The span at Met-1–Ala-13 shows a compositional bias: basic and acidic residues. The segment at Met-1 to Arg-33 is disordered. Polar residues predominate over residues Thr-23–Ala-32. A coiled-coil region spans residues Ser-28–Gln-103. Position 291–296 (Gly-291–Leu-296) interacts with ATP. The docks into pockets in the proteasome alpha-ring stretch occupies residues Tyr-601–Leu-602.

The protein belongs to the AAA ATPase family. Homohexamer. Assembles into a hexameric ring structure that caps the 20S proteasome core. Strongly interacts with the prokaryotic ubiquitin-like protein Pup through a hydrophobic interface; the interacting region of ARC lies in its N-terminal coiled-coil domain. There is one Pup binding site per ARC hexamer ring. Upon ATP-binding, the C-terminus of ARC interacts with the alpha-rings of the proteasome core, possibly by binding to the intersubunit pockets.

It functions in the pathway protein degradation; proteasomal Pup-dependent pathway. In terms of biological role, ATPase which is responsible for recognizing, binding, unfolding and translocation of pupylated proteins into the bacterial 20S proteasome core particle. May be essential for opening the gate of the 20S proteasome via an interaction with its C-terminus, thereby allowing substrate entry and access to the site of proteolysis. Thus, the C-termini of the proteasomal ATPase may function like a 'key in a lock' to induce gate opening and therefore regulate proteolysis. The chain is Proteasome-associated ATPase from Saccharomonospora viridis (strain ATCC 15386 / DSM 43017 / JCM 3036 / CCUG 5913 / NBRC 12207 / NCIMB 9602 / P101) (Thermoactinomyces viridis).